The primary structure comprises 429 residues: Adenylosuccinate synthetase (429 aa).

Residues 12–18 (GDEGKGK) and 40–42 (GHT) contribute to the GTP site. Residue D13 is the Proton acceptor of the active site. Mg(2+)-binding residues include D13 and G40. IMP-binding positions include 13 to 16 (DEGK), 38 to 41 (NAGH), T128, R142, Q223, T238, and R302. The active-site Proton donor is the H41. 298 to 304 (VNTGRPR) provides a ligand contact to substrate. GTP contacts are provided by residues R304, 330-332 (KLD), and 412-414 (GVG).

The protein belongs to the adenylosuccinate synthetase family. In terms of assembly, homodimer. The cofactor is Mg(2+).

It is found in the cytoplasm. It catalyses the reaction IMP + L-aspartate + GTP = N(6)-(1,2-dicarboxyethyl)-AMP + GDP + phosphate + 2 H(+). It participates in purine metabolism; AMP biosynthesis via de novo pathway; AMP from IMP: step 1/2. Functionally, plays an important role in the de novo pathway of purine nucleotide biosynthesis. Catalyzes the first committed step in the biosynthesis of AMP from IMP. In Pseudarthrobacter chlorophenolicus (strain ATCC 700700 / DSM 12829 / CIP 107037 / JCM 12360 / KCTC 9906 / NCIMB 13794 / A6) (Arthrobacter chlorophenolicus), this protein is Adenylosuccinate synthetase.